The chain runs to 85 residues: uncharacterized protein (85 aa).

Disordered stretches follow at residues 1-22 (MFAPPSSLFVPATAPAPSTSGF) and 41-85 (EKER…SFLR). Polar residues predominate over residues 75-85 (FPSNYRGSFLR).

This is an uncharacterized protein from Dryophytes versicolor (chameleon treefrog).